Consider the following 451-residue polypeptide: Phosphoglucosamine mutase (451 aa).

Residue serine 102 is the Phosphoserine intermediate of the active site. The Mg(2+) site is built by serine 102, aspartate 242, aspartate 244, and aspartate 246. Serine 102 is subject to Phosphoserine.

Belongs to the phosphohexose mutase family. Mg(2+) is required as a cofactor. Post-translationally, activated by phosphorylation.

The catalysed reaction is alpha-D-glucosamine 1-phosphate = D-glucosamine 6-phosphate. Functionally, catalyzes the conversion of glucosamine-6-phosphate to glucosamine-1-phosphate. The sequence is that of Phosphoglucosamine mutase from Staphylococcus saprophyticus subsp. saprophyticus (strain ATCC 15305 / DSM 20229 / NCIMB 8711 / NCTC 7292 / S-41).